Consider the following 258-residue polypeptide: Regulatory protein RecX (258 aa).

The protein belongs to the RecX family.

It is found in the cytoplasm. Functionally, modulates RecA activity. The sequence is that of Regulatory protein RecX from Streptococcus pyogenes serotype M3 (strain ATCC BAA-595 / MGAS315).